Consider the following 176-residue polypeptide: UPF0098 protein Rv2140c (176 aa).

Thr-2 bears the N-acetylthreonine mark.

Belongs to the UPF0098 family.

The polypeptide is UPF0098 protein Rv2140c (Mycobacterium tuberculosis (strain ATCC 25618 / H37Rv)).